The following is a 170-amino-acid chain: MKNNPYIIWLTGLAGSGKTTIGQALYEKLKLKYKNLIYLDGDELREILGHYAYDRQGRIDMALKRAKFAKFLNDQGMMVIVTTISMFNEIYDYNRKQLKNYYEIYIECDMHELIQRDQKGLYTKALNKEIDNVVGVDIEFDKPEADLVINNSCRNNLEEKVELIIKKLAL.

It belongs to the APS kinase family.

The enzyme catalyses cytidine 5'-diphosphoramidate + ATP = cytidine 3'-phospho-5'-diphosphoramidate + ADP + H(+). It functions in the pathway capsule biogenesis; capsule polysaccharide biosynthesis. In terms of biological role, involved in the biosynthesis of the O-methyl phosphoramidate (MeOPN) group found on the capsular polysaccharide (CPS) of C.jejuni. Catalyzes the ATP-dependent phosphorylation of cytidine diphosphoramidate (CDP-NH(2)) to form cytidine 3'-phosphate 5'-diphosphoramidate. Can also use other substrates such as the corresponding adenine and uridine diphosphoramidate derivatives or cytidine diphosphoramidate analogs, with lower efficiency. This is Cytidine diphosphoramidate kinase from Campylobacter jejuni subsp. jejuni serotype O:2 (strain ATCC 700819 / NCTC 11168).